The sequence spans 329 residues: Glycosyltransferase family protein 64 C3 (329 aa).

An N-terminal signal peptide occupies residues 1 to 27 (MGVKSVRFSIWFLFVVTDLVFCRTLSG). The N-linked (GlcNAc...) asparagine glycan is linked to N99. Substrate is bound by residues 118–123 (SSLNAR), 139–141 (DDD), R169, 226–230 (RNCED), and 271–284 (VGLSSRRVEHRKRR). D141 contributes to the Mn(2+) binding site. C228 and C287 are disulfide-bonded. The active site involves D230. Residues 268 to 284 (VRDVGLSSRRVEHRKRR) are substrate binding.

This sequence belongs to the glycosyltransferase 64 family. It depends on Mn(2+) as a cofactor.

It functions in the pathway protein modification; protein glycosylation. Probable glycosyltransferase. The polypeptide is Glycosyltransferase family protein 64 C3 (Arabidopsis thaliana (Mouse-ear cress)).